The following is a 132-amino-acid chain: T-cell receptor alpha chain V region CTL-F3 (132 aa).

Positions 1-22 are cleaved as a signal peptide; the sequence is MNMRPDTCSVLVLLLMLRRNNG. Residues 23–114 are v segment; that stretch reads DSVTQTEGLV…DSALYYCALS (92 aa). Asparagine 43 carries N-linked (GlcNAc...) asparagine glycosylation. Cysteine 44 and cysteine 111 are disulfide-bonded. The interval 115–132 is j segment; it reads NAGAKLTFGGGTRLTVRP.

The polypeptide is T-cell receptor alpha chain V region CTL-F3 (Mus musculus (Mouse)).